Consider the following 136-residue polypeptide: Holo-[acyl-carrier-protein] synthase (136 aa).

Mg(2+) is bound by residues Asp8 and Glu57.

The protein belongs to the P-Pant transferase superfamily. AcpS family. It depends on Mg(2+) as a cofactor.

It is found in the cytoplasm. It catalyses the reaction apo-[ACP] + CoA = holo-[ACP] + adenosine 3',5'-bisphosphate + H(+). Its function is as follows. Transfers the 4'-phosphopantetheine moiety from coenzyme A to a Ser of acyl-carrier-protein. The sequence is that of Holo-[acyl-carrier-protein] synthase from Methylobacterium radiotolerans (strain ATCC 27329 / DSM 1819 / JCM 2831 / NBRC 15690 / NCIMB 10815 / 0-1).